We begin with the raw amino-acid sequence, 440 residues long: 23S rRNA (uracil(1939)-C(5))-methyltransferase RlmD (440 aa).

A TRAM domain is found at lysine 10–glutamine 68. Residues cysteine 81, cysteine 87, cysteine 90, and cysteine 169 each coordinate [4Fe-4S] cluster. 6 residues coordinate S-adenosyl-L-methionine: glutamine 272, phenylalanine 301, asparagine 306, glutamate 322, aspartate 349, and aspartate 372. The active-site Nucleophile is the cysteine 398.

This sequence belongs to the class I-like SAM-binding methyltransferase superfamily. RNA M5U methyltransferase family. RlmD subfamily.

It carries out the reaction uridine(1939) in 23S rRNA + S-adenosyl-L-methionine = 5-methyluridine(1939) in 23S rRNA + S-adenosyl-L-homocysteine + H(+). Functionally, catalyzes the formation of 5-methyl-uridine at position 1939 (m5U1939) in 23S rRNA. The chain is 23S rRNA (uracil(1939)-C(5))-methyltransferase RlmD from Tolumonas auensis (strain DSM 9187 / NBRC 110442 / TA 4).